We begin with the raw amino-acid sequence, 283 residues long: Urease accessory protein UreD (283 aa).

It belongs to the UreD family. As to quaternary structure, ureD, UreF and UreG form a complex that acts as a GTP-hydrolysis-dependent molecular chaperone, activating the urease apoprotein by helping to assemble the nickel containing metallocenter of UreC. The UreE protein probably delivers the nickel.

The protein resides in the cytoplasm. Functionally, required for maturation of urease via the functional incorporation of the urease nickel metallocenter. In Acaryochloris marina (strain MBIC 11017), this protein is Urease accessory protein UreD.